Here is a 352-residue protein sequence, read N- to C-terminus: MGAALALLGDLVATVSEAAAATGFSVAEIAAGEAAAAIEVQIASLATVEGITSTEAIAAIGLTPQTYAVITGAPGAIAGIAALVQTVSGVSSVAQVGYKFFSEWDHKISTVGLNQQPGMALELFNPEDYDILFPGVNTFVNNIQYLDPRHWGPTLFSAISQAFWHLVRDDLPRLTSQEIERRTQRFFRDSLAKFLEETTWTIVNAPINLYNSIQNYYSALSPIRPSMVRQVAEREGTQVTFGHSYSQSIDDADSIEEVTQRLDLRNKEANVHSGEFIEKTLAPGGANQRIAPQWMLPLLLGLYGTVTPALEAYEDAPSKKKRRMSRGSSQKAKGPRASSKTSYKRRRRSTRS.

The N-myristoyl glycine; by host moiety is linked to residue glycine 2. Positions 273-308 are D1; that stretch reads SGEFIEKTLAPGGANQRIAPQWMLPLLLGLYGTVTP. A helical membrane pass occupies residues 290 to 310; it reads IAPQWMLPLLLGLYGTVTPAL. The disordered stretch occupies residues 312–352; it reads AYEDAPSKKKRRMSRGSSQKAKGPRASSKTSYKRRRRSTRS. The interval 313 to 352 is DNA-binding; sequence YEDAPSKKKRRMSRGSSQKAKGPRASSKTSYKRRRRSTRS. The Nuclear localization signal signature appears at 316–324; the sequence is APSKKKRRM. Residues 342–352 are compositionally biased toward basic residues; the sequence is SYKRRRRSTRS.

The protein belongs to the polyomaviruses capsid protein VP2 family. As to quaternary structure, forms homooligomers, and heterooligomers with VP3 in the endoplasmic reticulum membrane. Interacts (via D1 domain) with VP1. Interacts (via D1 domain) with VP1.

The protein resides in the virion. It is found in the host nucleus. The protein localises to the host endoplasmic reticulum. It localises to the host endoplasmic reticulum membrane. Structural protein that resides within the core of the capsid surrounded by 72 VP1 pentamers. Participates in host cell receptor binding together with VP1. Following virus endocytosis and trafficking to the endoplasmic reticulum, VP2 and VP3 form oligomers and integrate into the endoplasmic reticulum membrane. Heterooligomer VP2-VP3 may create a viroporin for transporting the viral genome across the endoplasmic reticulum membrane to the cytoplasm. Nuclear entry of the viral DNA involves the selective exposure and importin recognition of VP2 or VP3 nuclear localization signal (shared C-terminus). Plays a role in virion assembly within the nucleus in particular through a DNA-binding domain located in the C-terminal region. An N-terminal myristoylation suggests a scaffold function for virion assembly. Its function is as follows. Structural protein that resides within the core of the capsid surrounded by 72 VP1 pentamers. Following virus endocytosis and trafficking to the endoplasmic reticulum, VP2 and VP3 form oligomers and integrate into the endoplasmic reticulum membrane. Heterooligomer VP2-VP3 may create a viroporin for transporting the viral genome across the endoplasmic reticulum membrane to the cytoplasm. Nuclear entry of the viral DNA involves the selective exposure and importin recognition of VP2 or VP3 nuclear localization signal (shared C-terminus). Plays a role in virion assembly within the nucleus. May participate in host cell lysis when associated with VP4. In terms of biological role, viroporin inducing perforation of cellular membranes to trigger virus progeny release. Forms pores of 3 nm inner diameter. VP4 is expressed about 24 hours after the late structural proteins and is not incorporated into the mature virion. This Simian virus 12 (strain wt100) (SV-12) protein is Minor capsid protein VP2.